The chain runs to 156 residues: Endoribonuclease YbeY (156 aa).

Zn(2+) is bound by residues His117, His121, and His127.

Belongs to the endoribonuclease YbeY family. Zn(2+) is required as a cofactor.

Its subcellular location is the cytoplasm. Its function is as follows. Single strand-specific metallo-endoribonuclease involved in late-stage 70S ribosome quality control and in maturation of the 3' terminus of the 16S rRNA. This is Endoribonuclease YbeY from Herminiimonas arsenicoxydans.